Here is a 455-residue protein sequence, read N- to C-terminus: Tumor necrosis factor receptor superfamily member 1A (455 aa).

A signal peptide spans 1-29; it reads MGLSTVPDLLLPLVLLELLVGIYPSGVIG. The Extracellular portion of the chain corresponds to 30 to 211; that stretch reads LVPHLGDREK…VKGTEDSGTT (182 aa). TNFR-Cys repeat units follow at residues 43–82, 83–125, 126–166, and 167–196; these read VCPQ…TDCR, ECES…DTVC, GCRK…NTVC, and TCHA…KLCL. Cystine bridges form between Cys-44–Cys-58, Cys-59–Cys-72, Cys-62–Cys-81, Cys-84–Cys-99, Cys-102–Cys-117, Cys-105–Cys-125, and Cys-127–Cys-143. Asn-54 carries an N-linked (GlcNAc...) asparagine glycan. N-linked (GlcNAc...) asparagine glycosylation is found at Asn-145 and Asn-151. Intrachain disulfides connect Cys-146–Cys-158, Cys-149–Cys-166, Cys-168–Cys-179, Cys-182–Cys-195, and Cys-185–Cys-191. A helical transmembrane segment spans residues 212–232; the sequence is VLLPLVIFFGLCLLSLLFIGL. Residues 233–455 lie on the Cytoplasmic side of the membrane; that stretch reads MYRYQRWKSK…ALPPAPSLLR (223 aa). A disordered region spans residues 254 to 273; the sequence is EKEGELEGTTTKPLAPNPSF. The segment at 338–348 is N-SMase activation domain (NSD); the sequence is LQKWEDSAHKP. Residues 356–441 form the Death domain; the sequence is PATLYAVVEN…GCLEDIEEAL (86 aa). (Microbial infection) N-beta-linked (GlcNAc) arginine glycosylation occurs at Arg-376.

Binding of TNF to the extracellular domain leads to homotrimerization. The aggregated death domains provide a novel molecular interface that interacts specifically with the death domain of TRADD. Various TRADD-interacting proteins such as TRAFS, RIPK1 and possibly FADD, are recruited to the complex by their association with TRADD. This complex activates at least two distinct signaling cascades, apoptosis and NF-kappa-B signaling. Interacts with BAG4, BABAM2, FEM1B, GRB2, SQSTM1 and TRPC4AP. Interacts directly with NOL3 (via CARD domain); inhibits TNF-signaling pathway. Interacts with SH3RF2, TRADD and RIPK1. SH3RF2 facilitates the recruitment of RIPK1 and TRADD to TNFRSF1A in a TNF-alpha-dependent process. Interacts with PGLYRP1; this interaction is important for cell death induction. Interacts (via death domain) with MADD (via death domain). As to quaternary structure, (Microbial infection) Interacts with mumps virus protein SH; this interaction inhibits downstream NF-kappa-B pathway activation. In terms of assembly, (Microbial infection) Interacts with HCV core protein. (Microbial infection) Interacts with human cytomegalovirus/HHV-5 protein UL138. As to quaternary structure, (Microbial infection) Interacts with host TNFRSF1A; this interaction leads to the stimulation of both surface expression and shedding of TNFRSF1A. The soluble form is produced from the membrane form by proteolytic processing. In terms of processing, (Microbial infection) Glycosylated at Arg-376 by enteropathogenic E.coli protein NleB1 and S.typhimurium protein Ssek3: arginine GlcNAcylation prevents homotypic/heterotypic death domain interactions.

The protein localises to the cell membrane. The protein resides in the golgi apparatus membrane. Its subcellular location is the secreted. In terms of biological role, receptor for TNFSF2/TNF-alpha and homotrimeric TNFSF1/lymphotoxin-alpha. The adapter molecule FADD recruits caspase-8 to the activated receptor. The resulting death-inducing signaling complex (DISC) performs caspase-8 proteolytic activation which initiates the subsequent cascade of caspases (aspartate-specific cysteine proteases) mediating apoptosis. Contributes to the induction of non-cytocidal TNF effects including anti-viral state and activation of the acid sphingomyelinase. The polypeptide is Tumor necrosis factor receptor superfamily member 1A (TNFRSF1A) (Homo sapiens (Human)).